A 210-amino-acid polypeptide reads, in one-letter code: Cytochrome c4 (210 aa).

Residues 1–20 form the signal peptide; the sequence is MNKVLVSLLLTLGITGMAHA. Positions 34, 37, 38, 86, 139, 142, 143, and 187 each coordinate heme c.

In terms of processing, binds 2 heme c groups covalently per subunit.

Its subcellular location is the periplasm. Its function is as follows. Diheme, high potential cytochrome c believed to be an intermediate electron donor to terminal oxidation systems. The sequence is that of Cytochrome c4 (cc4) from Stutzerimonas stutzeri (Pseudomonas stutzeri).